Consider the following 867-residue polypeptide: GATOR2 complex protein Mio (867 aa).

WD repeat units lie at residues 51 to 86 (ANES…GICN), 100 to 144 (RQQR…PKET), 149 to 188 (GVGE…ATCQ), 190 to 228 (IQTK…SPLR), and 231 to 272 (QSSK…TDNS). Residues 350–376 (PASPTSTAATPTQQQPTSSCSTNSGSS) are compositionally biased toward low complexity. The segment at 350-378 (PASPTSTAATPTQQQPTSSCSTNSGSSLD) is disordered. Residues 739–777 (LSCNFCGKSVSNALLDEPRPRSTTTSTNRLSSCPSCRKP) form a C4-type zinc finger. Residues Cys741, Cys744, Cys771, Cys774, Cys784, Cys821, Cys824, His826, His829, His832, Cys843, Cys848, and Cys852 each coordinate Zn(2+). The RING-type; atypical zinc finger occupies 778 to 857 (LPRCSLCLMH…CNCRCFDMDG (80 aa)).

Belongs to the WD repeat mio family. In terms of assembly, component of the GATOR complex consisting of mio, Nup44A/Seh1, Im11, Nplr3, Nplr2, Wdr24, Wdr59 and Sec13. Within the GATOR complex, probable component of the GATOR2 subcomplex which is likely composed of mio, Nup44A/Seh1, Wdr24, Wdr59 and Sec13. Interacts with Wdr24. Interacts with nucleoporin Nup44A/Seh1. The GATOR2 complex associates with unmet in the absence of S-adenosyl-L-methionine; the mio-Wdr24-Nup44A subcomplex is essential and sufficient for this interaction while Wdr59 and Sec13 are dispensable. This association acts as a nutrient sensor to inhibit mTORC1 signaling in the absence of methionine. Present in the oocyte.

Its subcellular location is the nucleus. The protein localises to the lysosome. In terms of biological role, an essential component of the GATOR subcomplex GATOR2 which functions as an activator of the amino acid-sensing branch of the mTORC1 signaling pathway. The two GATOR subcomplexes, GATOR1 and GATOR2, regulate the mTORC1 pathway in order to mediate metabolic homeostasis, female gametogenesis and the response to amino acid limitation and complete starvation. GATOR2 activates the mTORC1 signaling pathway through the inhibition of the GATOR1 subcomplex, controlling the switch to cell proliferation and growth under nutrient replete conditions and during female oocyte development. This component is required for activating mTORC1 specifically in germline cells to promote cell growth and maintain the oocyte fate. GATOR1 and GATOR2 act at different stages of oogenesis to regulate mTORC1 in order to control meiotic entry and promote oocyte growth and development. After exactly four mitotic cyst divisions, the GATOR1 complex members (Iml1, Nprl2 and Nprl3) down-regulate mTORC1 to slow cellular metabolism and promote the mitotic/meiotic transition. At later stages of oogenesis, the mio and Nup44A components of the GATOR2 complex inhibit GATOR1 and thus activate mTORC1 to promote meiotic progression, and drive oocyte growth and development. In addition to its role in the regulation of the mTORC1 complex, functions independently of mTORC1 to prevent the inappropriate accumulation of autolysosomes in germline tissues. The chain is GATOR2 complex protein Mio from Drosophila melanogaster (Fruit fly).